We begin with the raw amino-acid sequence, 213 residues long: Superoxide dismutase [Mn] (213 aa).

The Mn(2+) site is built by His27, His82, Asp168, and His172.

It belongs to the iron/manganese superoxide dismutase family. As to quaternary structure, homodimer. Requires Mn(2+) as cofactor.

The catalysed reaction is 2 superoxide + 2 H(+) = H2O2 + O2. Its function is as follows. Destroys superoxide anion radicals which are normally produced within the cells and which are toxic to biological systems. The protein is Superoxide dismutase [Mn] (sodA) of Mannheimia haemolytica (Pasteurella haemolytica).